We begin with the raw amino-acid sequence, 337 residues long: Monoacylglycerol lipase ABHD6 (337 aa).

Residues 1 to 8 (MDLDVVNM) are Extracellular-facing. Residues 9–29 (FVIAGGTLAIPILAFVASFLL) traverse the membrane as a helical; Signal-anchor for type II membrane protein segment. Residues 30–337 (WPSALIRIYY…HNTDNNKKLD (308 aa)) are Cytoplasmic-facing. Residues 72-313 (PSILMLHGFS…CGHSVVMERP (242 aa)) enclose the AB hydrolase-1 domain. Residue Phe-80 coordinates (9Z)-octadecenoate. Ser-148 acts as the Nucleophile in catalysis. Met-149 contributes to the (9Z)-octadecenoate binding site. Catalysis depends on charge relay system residues Asp-278 and His-306. Residue His-306 participates in (9Z)-octadecenoate binding.

Belongs to the AB hydrolase superfamily.

The protein resides in the late endosome membrane. The protein localises to the lysosome membrane. It localises to the mitochondrion membrane. The catalysed reaction is Hydrolyzes glycerol monoesters of long-chain fatty acids.. It carries out the reaction 1-octanoylglycerol + H2O = octanoate + glycerol + H(+). It catalyses the reaction 1-decanoylglycerol + H2O = decanoate + glycerol + H(+). The enzyme catalyses 1-dodecanoylglycerol + H2O = dodecanoate + glycerol + H(+). The catalysed reaction is 1-tetradecanoylglycerol + H2O = tetradecanoate + glycerol + H(+). It carries out the reaction 2-hexadecanoylglycerol + H2O = glycerol + hexadecanoate + H(+). It catalyses the reaction 2-(9Z-octadecenoyl)-glycerol + H2O = glycerol + (9Z)-octadecenoate + H(+). The enzyme catalyses 1-(9Z-octadecenoyl)-glycerol + H2O = glycerol + (9Z)-octadecenoate + H(+). The catalysed reaction is 2-(9Z,12Z-octadecadienoyl)-glycerol + H2O = (9Z,12Z)-octadecadienoate + glycerol + H(+). It carries out the reaction 2-(5Z,8Z,11Z,14Z-eicosatetraenoyl)-glycerol + H2O = glycerol + (5Z,8Z,11Z,14Z)-eicosatetraenoate + H(+). It catalyses the reaction 1-(5Z,8Z,11Z,14Z-eicosatetraenoyl)-glycerol + H2O = glycerol + (5Z,8Z,11Z,14Z)-eicosatetraenoate + H(+). The enzyme catalyses 1-(9Z,12Z-octadecadienoyl)-glycerol + H2O = (9Z,12Z)-octadecadienoate + glycerol + H(+). The catalysed reaction is 3-(9Z-octadecenoyl)-sn-glycero-1-phospho-(3'-(9Z-octadecenoyl)-1'-sn-glycerol) + H2O = 3-(9Z-octadecenoyl)-sn-glycero-1-phospho-(1'-sn-glycerol) + (9Z)-octadecenoate + H(+). It carries out the reaction (S,S)-2-(9Z-octadecenoyl)-sn-glycero-1-phospho-(2'-(9Z-octadecenoyl)-1'-sn-glycerol) + H2O = (S,S)-2-(9Z-octadecenoyl)-sn-glycero-1-phospho-(1'-sn-glycerol) + (9Z)-octadecenoate + H(+). It catalyses the reaction (R,R)-2-(9Z-octadecenoyl)-sn-glycero-3-phospho-(2'-(9Z-octadecenoyl)-3'-sn-glycerol) + H2O = (R,R)-2-(9Z-octadecenoyl)-sn-glycero-3-phospho-(3'-sn-glycerol) + (9Z)-octadecenoate + H(+). Functionally, lipase that preferentially hydrolysis medium-chain saturated monoacylglycerols including 2-arachidonoylglycerol. Through 2-arachidonoylglycerol degradation may regulate endocannabinoid signaling pathways. Also has a lysophosphatidyl lipase activity with a preference for lysophosphatidylglycerol among other lysophospholipids. Also able to degrade bis(monoacylglycero)phosphate (BMP) and constitutes the major enzyme for BMP catabolism. BMP, also known as lysobisphosphatidic acid, is enriched in late endosomes and lysosomes and plays a key role in the formation of intraluminal vesicles and in lipid sorting. The protein is Monoacylglycerol lipase ABHD6 of Homo sapiens (Human).